Reading from the N-terminus, the 456-residue chain is Membrane-bound lytic murein transglycosylase F (456 aa).

A signal peptide spans 1–22; that stretch reads MKTWPSRAVSLLLLALALPVGC. A non-LT domain region spans residues 23-267; sequence SEPPPPVRDP…ALDETWFGRF (245 aa). The interval 268–456 is LT domain; it reads GDYDYVDVAR…YRALLAAQDL (189 aa). Glutamate 314 is an active-site residue.

This sequence in the N-terminal section; belongs to the bacterial solute-binding protein 3 family. The protein in the C-terminal section; belongs to the transglycosylase Slt family.

The protein localises to the cell outer membrane. The catalysed reaction is Exolytic cleavage of the (1-&gt;4)-beta-glycosidic linkage between N-acetylmuramic acid (MurNAc) and N-acetylglucosamine (GlcNAc) residues in peptidoglycan, from either the reducing or the non-reducing ends of the peptidoglycan chains, with concomitant formation of a 1,6-anhydrobond in the MurNAc residue.. Its function is as follows. Murein-degrading enzyme that degrades murein glycan strands and insoluble, high-molecular weight murein sacculi, with the concomitant formation of a 1,6-anhydromuramoyl product. Lytic transglycosylases (LTs) play an integral role in the metabolism of the peptidoglycan (PG) sacculus. Their lytic action creates space within the PG sacculus to allow for its expansion as well as for the insertion of various structures such as secretion systems and flagella. The chain is Membrane-bound lytic murein transglycosylase F from Maricaulis maris (strain MCS10) (Caulobacter maris).